The primary structure comprises 344 residues: Ferrochelatase (344 aa).

Positions 214 and 295 each coordinate Fe cation.

It belongs to the ferrochelatase family.

It is found in the cytoplasm. It catalyses the reaction heme b + 2 H(+) = protoporphyrin IX + Fe(2+). The protein operates within porphyrin-containing compound metabolism; protoheme biosynthesis; protoheme from protoporphyrin-IX: step 1/1. Its function is as follows. Catalyzes the ferrous insertion into protoporphyrin IX. The sequence is that of Ferrochelatase from Rhizobium etli (strain ATCC 51251 / DSM 11541 / JCM 21823 / NBRC 15573 / CFN 42).